A 753-amino-acid polypeptide reads, in one-letter code: 5-methyltetrahydropteroyltriglutamate--homocysteine methyltransferase (753 aa).

5-methyltetrahydropteroyltri-L-glutamate is bound by residues 19 to 22 (RELK) and R113. Residues 430–432 (IGS) and E483 contribute to the L-homocysteine site. L-methionine contacts are provided by residues 430–432 (IGS) and E483. Residues 514 to 515 (RC) and W560 each bind 5-methyltetrahydropteroyltri-L-glutamate. D598 is a binding site for L-homocysteine. Residue D598 participates in L-methionine binding. A 5-methyltetrahydropteroyltri-L-glutamate-binding site is contributed by E604. Residues H640, C642, and E664 each contribute to the Zn(2+) site. Catalysis depends on H693, which acts as the Proton donor. C725 provides a ligand contact to Zn(2+).

Belongs to the vitamin-B12 independent methionine synthase family. Zn(2+) serves as cofactor.

It catalyses the reaction 5-methyltetrahydropteroyltri-L-glutamate + L-homocysteine = tetrahydropteroyltri-L-glutamate + L-methionine. The protein operates within amino-acid biosynthesis; L-methionine biosynthesis via de novo pathway; L-methionine from L-homocysteine (MetE route): step 1/1. In terms of biological role, catalyzes the transfer of a methyl group from 5-methyltetrahydrofolate to homocysteine resulting in methionine formation. This chain is 5-methyltetrahydropteroyltriglutamate--homocysteine methyltransferase, found in Rhodococcus jostii (strain RHA1).